A 371-amino-acid chain; its full sequence is Probable inactive methyltransferase Os04g0175900 (371 aa).

Position 137–143 (Leu137–Asn143) interacts with substrate. Residues Leu170 to Met188 are substrate binding. The S-adenosyl-L-methionine site is built by Gly216, Asp239, Met260, and Lys273.

The protein belongs to the class I-like SAM-binding methyltransferase superfamily. Cation-independent O-methyltransferase family. COMT subfamily.

The chain is Probable inactive methyltransferase Os04g0175900 from Oryza sativa subsp. japonica (Rice).